The following is a 205-amino-acid chain: Arginine exporter protein ArgO (205 aa).

6 consecutive transmembrane segments (helical) span residues 1–21, 42–62, 67–87, 111–131, 147–167, and 185–205; these read MLAVYLHGFILSAAMILPLGP, LCALSDIILICAGIFGGSALL, LLLALVTWGGVAFLMWYGWGA, ILVTLLAVTWLNPHVYLDTFV, WFALGAVTASIVWFFALAFLA, and LFVGGVMGFIAFQLARQGFGL.

This sequence belongs to the LysE/ArgO transporter (TC 2.A.75) family.

The protein localises to the cell inner membrane. It carries out the reaction L-arginine(in) = L-arginine(out). Its function is as follows. Involved in the export of arginine. Important to control the intracellular level of arginine and the correct balance between arginine and lysine. This chain is Arginine exporter protein ArgO, found in Yersinia pseudotuberculosis serotype O:3 (strain YPIII).